The following is a 446-amino-acid chain: Probable polyamine aminopropyl transferase (446 aa).

The interval methionine 1–valine 117 is unknown. Positions glycine 64–serine 94 are disordered. Over residues arginine 75–serine 94 the composition is skewed to polar residues. In terms of domain architecture, PABS spans alanine 116–glycine 351. Residues isoleucine 118 to glutamate 353 form a spermidine synthase region. S-methyl-5'-thioadenosine is bound by residues asparagine 147, glutamate 226, and aspartate 251–glycine 252. Catalysis depends on aspartate 269, which acts as the Proton acceptor.

The protein belongs to the spermidine/spermine synthase family. Homodimer or homotetramer.

The protein resides in the cytoplasm. The enzyme catalyses S-adenosyl 3-(methylsulfanyl)propylamine + putrescine = S-methyl-5'-thioadenosine + spermidine + H(+). It functions in the pathway amine and polyamine biosynthesis; spermidine biosynthesis; spermidine from putrescine: step 1/1. In terms of biological role, catalyzes the irreversible transfer of a propylamine group from the amino donor S-adenosylmethioninamine (decarboxy-AdoMet) to putrescine (1,4-diaminobutane) to yield spermidine. This Bifidobacterium longum (strain NCC 2705) protein is Probable polyamine aminopropyl transferase (speE).